The sequence spans 105 residues: Phosphoribosyl-AMP cyclohydrolase (105 aa).

Mg(2+) is bound at residue D72. C73 is a binding site for Zn(2+). 2 residues coordinate Mg(2+): D74 and D76. C89 and C96 together coordinate Zn(2+).

This sequence belongs to the PRA-CH family. In terms of assembly, homodimer. It depends on Mg(2+) as a cofactor. Requires Zn(2+) as cofactor.

The protein localises to the cytoplasm. The catalysed reaction is 1-(5-phospho-beta-D-ribosyl)-5'-AMP + H2O = 1-(5-phospho-beta-D-ribosyl)-5-[(5-phospho-beta-D-ribosylamino)methylideneamino]imidazole-4-carboxamide. It participates in amino-acid biosynthesis; L-histidine biosynthesis; L-histidine from 5-phospho-alpha-D-ribose 1-diphosphate: step 3/9. In terms of biological role, catalyzes the hydrolysis of the adenine ring of phosphoribosyl-AMP. This is Phosphoribosyl-AMP cyclohydrolase from Listeria monocytogenes serotype 4a (strain HCC23).